Here is a 1019-residue protein sequence, read N- to C-terminus: Type VI secretion system spike protein VgrG2b (1019 aa).

The disordered stretch occupies residues 268-291 (AGRPFTESRLRGHRRDARVASVSG). His935 contributes to the Zn(2+) binding site. Glu936 is a catalytic residue. His939 and Glu983 together coordinate Zn(2+).

The protein belongs to the VgrG protein family. As to quaternary structure, interacts with Tla3; this interaction promotes Tle3 loading onto VgrG2b. Interacts with host gamma-tubulin ring complex components GCP1 and GCP4. Zn(2+) is required as a cofactor.

It is found in the secreted. Its function is as follows. Part of the H2 type VI secretion system (H2-T6SS) specialized secretion system, which delivers several virulence factors in both prokaryotic and eukaryotic cells during infection. Forms the spike at the tip of the elongating tube probably formed by haemolysin co-regulated protein 2b/Hcp2b. Allows the delivery of the Tle3 antibacterial toxin to target cells where it exerts its toxicity. Additionally, acts directly as an effector and promotes internalization by interacting with the host gamma-tubulin ring complex. Elicits toxicity also in the bacterial periplasm and disrupts bacterial cell morphology. Toxicity is counteracted by a cognate immunity protein. The protein is Type VI secretion system spike protein VgrG2b (vgrG2b) of Pseudomonas aeruginosa (strain ATCC 15692 / DSM 22644 / CIP 104116 / JCM 14847 / LMG 12228 / 1C / PRS 101 / PAO1).